The chain runs to 208 residues: Ribosomal RNA small subunit methyltransferase G (208 aa).

Residues Gly78, Phe83, 101–103 (ERS), 129–130 (IE), and Arg142 each bind S-adenosyl-L-methionine.

The protein belongs to the methyltransferase superfamily. RNA methyltransferase RsmG family.

The protein resides in the cytoplasm. In terms of biological role, specifically methylates the N7 position of a guanine in 16S rRNA. This chain is Ribosomal RNA small subunit methyltransferase G, found in Borreliella burgdorferi (strain ZS7) (Borrelia burgdorferi).